Reading from the N-terminus, the 378-residue chain is Acetylornithine deacetylase (378 aa).

Position 76 (H76) interacts with Zn(2+). The active site involves D78. Zn(2+) is bound at residue D108. The active site involves E140. The Zn(2+) site is built by E141, E165, and H351.

It belongs to the peptidase M20A family. ArgE subfamily. In terms of assembly, homodimer. It depends on Zn(2+) as a cofactor. The cofactor is Co(2+). Glutathione serves as cofactor.

It localises to the cytoplasm. It catalyses the reaction N(2)-acetyl-L-ornithine + H2O = L-ornithine + acetate. It functions in the pathway amino-acid biosynthesis; L-arginine biosynthesis; L-ornithine from N(2)-acetyl-L-ornithine (linear): step 1/1. Its function is as follows. Catalyzes the hydrolysis of the amide bond of N(2)-acetylated L-amino acids. Cleaves the acetyl group from N-acetyl-L-ornithine to form L-ornithine, an intermediate in L-arginine biosynthesis pathway, and a branchpoint in the synthesis of polyamines. The polypeptide is Acetylornithine deacetylase (Vibrio vulnificus (strain CMCP6)).